A 338-amino-acid chain; its full sequence is Ferrochelatase (338 aa).

Residues His210 and Glu291 each contribute to the Fe cation site.

The protein belongs to the ferrochelatase family.

It localises to the cytoplasm. The catalysed reaction is heme b + 2 H(+) = protoporphyrin IX + Fe(2+). Its pathway is porphyrin-containing compound metabolism; protoheme biosynthesis; protoheme from protoporphyrin-IX: step 1/1. Its function is as follows. Catalyzes the ferrous insertion into protoporphyrin IX. The sequence is that of Ferrochelatase from Helicobacter acinonychis (strain Sheeba).